A 466-amino-acid chain; its full sequence is Cysteine--tRNA ligase (466 aa).

Cys29 is a Zn(2+) binding site. The 'HIGH' region signature appears at 31-41 (PTVYNYIHIGN). The Zn(2+) site is built by Cys209, His234, and Glu238. The 'KMSKS' region motif lies at 266-270 (KMSKS). Lys269 provides a ligand contact to ATP. Ser270 bears the Phosphoserine mark.

This sequence belongs to the class-I aminoacyl-tRNA synthetase family. As to quaternary structure, monomer. Zn(2+) is required as a cofactor.

The protein resides in the cytoplasm. It carries out the reaction tRNA(Cys) + L-cysteine + ATP = L-cysteinyl-tRNA(Cys) + AMP + diphosphate. This Bacillus velezensis (strain DSM 23117 / BGSC 10A6 / LMG 26770 / FZB42) (Bacillus amyloliquefaciens subsp. plantarum) protein is Cysteine--tRNA ligase.